Here is a 365-residue protein sequence, read N- to C-terminus: P43 5S RNA-binding protein (365 aa).

C2H2-type zinc fingers lie at residues 15–39 (LRCPAAGCKAFYRKEGKLQDHMAGH), 45–69 (WKCGIKDCDKVFARKRQILKHVKRH), 75–100 (LSCPTAGCKMTFSTKKSLSRHKLYKH), 106–130 (LKCFVPGCKRSFRKKRALRRHLSVH), 136–160 (SVCDVPGCSWKSSSVAKLVAHQKRH), 163–187 (YRCSYEGCQTVSPTWTALQTHVKKH), 191–213 (LQCAACKKPFKKASALRRHKATH), 220–245 (LPCPRQDCDKTFSSVFNLTHHVRKLH), and 251–275 (HRCPHSGCTRSFAMRESLLRHLVVH).

The 42S RNP particle comprises four subunits each of which contains one molecule of 5S RNA, three molecules of tRNA, two molecules of p50 (EF1-alpha) and one molecule of the 5S RNA binding protein 43.

In terms of biological role, p43 is a 5S RNA binding protein which is a major constituent of oocytes and comprises part of a 42S ribonucleoprotein storage particle. This chain is P43 5S RNA-binding protein, found in Xenopus laevis (African clawed frog).